The primary structure comprises 468 residues: UDP-N-acetylmuramate--L-alanine ligase (468 aa).

114-120 is an ATP binding site; that stretch reads GTHGKTT.

This sequence belongs to the MurCDEF family.

The protein localises to the cytoplasm. It carries out the reaction UDP-N-acetyl-alpha-D-muramate + L-alanine + ATP = UDP-N-acetyl-alpha-D-muramoyl-L-alanine + ADP + phosphate + H(+). The protein operates within cell wall biogenesis; peptidoglycan biosynthesis. Functionally, cell wall formation. The sequence is that of UDP-N-acetylmuramate--L-alanine ligase from Brucella anthropi (strain ATCC 49188 / DSM 6882 / CCUG 24695 / JCM 21032 / LMG 3331 / NBRC 15819 / NCTC 12168 / Alc 37) (Ochrobactrum anthropi).